The primary structure comprises 510 residues: Solute carrier family 2, facilitated glucose transporter member 2 (510 aa).

Residues 1-10 lie on the Cytoplasmic side of the membrane; it reads MTEDKVTGTL. The helical transmembrane segment at 11–31 threads the bilayer; the sequence is VLAVFTAVLSSFQFGYDIGVI. Residues 32–96 are Extracellular-facing; it reads NAPQQVIITH…SASLITMFWS (65 aa). N62 is a glycosylation site (N-linked (GlcNAc...) asparagine). A helical transmembrane segment spans residues 97–117; that stretch reads LSVSSFAVGGMIASFFGGLLG. At 118 to 122 the chain is on the cytoplasmic side; that stretch reads DKLGR. A helical membrane pass occupies residues 123 to 143; sequence IKALLVANILSLVGALLMGFS. The Extracellular portion of the chain corresponds to 144–157; it reads KLGPSHILIISGRG. The chain crosses the membrane as a helical span at residues 158–178; sequence ISGLYCGLISGLIPMYIGEIA. Topologically, residues 179-191 are cytoplasmic; the sequence is PTTLRGAIGALHQ. Q191 serves as a coordination point for D-glucose. A helical membrane pass occupies residues 192–212; that stretch reads LAIVTGILISQIVGLDFILGN. Residues 213–215 lie on the Extracellular side of the membrane; that stretch reads HEL. The helical transmembrane segment at 216–236 threads the bilayer; that stretch reads WHILLGLSAVPAILQCLLLFF. Residues 237–301 lie on the Cytoplasmic side of the membrane; that stretch reads CPESPRYLYI…LFTNASYRQP (65 aa). Residues 302 to 322 traverse the membrane as a helical segment; that stretch reads ILVALMLHAAQQFSGINGIFY. D-glucose is bound by residues 312 to 313 and N318; that span reads QQ. Topologically, residues 323-336 are extracellular; the sequence is YSTSIFQTAGISQP. The chain crosses the membrane as a helical span at residues 337–357; sequence VYATIGVGAVNTVFTAVSVFL. N347 is a D-glucose binding site. The Cytoplasmic portion of the chain corresponds to 358 to 365; it reads VEKAGRRS. The helical transmembrane segment at 366 to 386 threads the bilayer; it reads LFLIGMSGMFVCAIFMSVGLV. Over 387-400 the chain is Extracellular; sequence LLSKFPWMNYVSMT. A helical transmembrane segment spans residues 401–421; that stretch reads AIFLFVSFFEIGPGPIPWFMV. E410 and W418 together coordinate D-glucose. Residues 422–431 lie on the Cytoplasmic side of the membrane; sequence AEFFSQGPRP. A helical transmembrane segment spans residues 432 to 452; the sequence is AALAIAAFSNWTGNFIIALCF. Over 453-454 the chain is Extracellular; it reads QY. The helical transmembrane segment at 455-475 threads the bilayer; that stretch reads IADFCGPYVFFLLLVWSWPLF. The Cytoplasmic portion of the chain corresponds to 476–510; the sequence is CSHFLKFQKPKENPLRKSQQSSERRGVQLKRQKLL. Residues 490–510 form a disordered region; it reads LRKSQQSSERRGVQLKRQKLL.

It belongs to the major facilitator superfamily. Sugar transporter (TC 2.A.1.1) family. Glucose transporter subfamily. N-glycosylated; required for stability and retention at the cell surface of pancreatic beta cells.

The protein localises to the cell membrane. The catalysed reaction is D-glucose(out) = D-glucose(in). The enzyme catalyses D-fructose(out) = D-fructose(in). It catalyses the reaction L-dehydroascorbate(out) = L-dehydroascorbate(in). It carries out the reaction D-galactose(in) = D-galactose(out). Its activity is regulated as follows. D-glucose and maltose competitively inhibit fructose transport. D-glucose, D-fructose and maltose inhibit deoxyglucose transport. In terms of biological role, facilitative hexose transporter that mediates the transport of glucose, fructose and galactose. Likely mediates the bidirectional transfer of glucose across the plasma membrane of hepatocytes and is responsible for uptake of glucose by the beta cells; may comprise part of the glucose-sensing mechanism of the beta cell. May also participate with the Na(+)/glucose cotransporter in the transcellular transport of glucose in the small intestine and kidney. Also able to mediate the transport of dehydroascorbate. The polypeptide is Solute carrier family 2, facilitated glucose transporter member 2 (Bos taurus (Bovine)).